Here is a 314-residue protein sequence, read N- to C-terminus: 2,3-dihydroxyphenylpropionate/2,3-dihydroxicinnamic acid 1,2-dioxygenase (314 aa).

Catalysis depends on His-115, which acts as the Proton donor. His-179 acts as the Proton acceptor in catalysis.

This sequence belongs to the LigB/MhpB extradiol dioxygenase family. As to quaternary structure, homotetramer. Fe(2+) serves as cofactor.

It catalyses the reaction 3-(2,3-dihydroxyphenyl)propanoate + O2 = (2Z,4E)-2-hydroxy-6-oxonona-2,4-dienedioate + H(+). The catalysed reaction is (2E)-3-(2,3-dihydroxyphenyl)prop-2-enoate + O2 = (2Z,4E,7E)-2-hydroxy-6-oxonona-2,4,7-trienedioate + H(+). It participates in aromatic compound metabolism; 3-phenylpropanoate degradation. Functionally, catalyzes the non-heme iron(II)-dependent oxidative cleavage of 2,3-dihydroxyphenylpropionic acid and 2,3-dihydroxicinnamic acid into 2-hydroxy-6-ketononadienedioate and 2-hydroxy-6-ketononatrienedioate, respectively. This chain is 2,3-dihydroxyphenylpropionate/2,3-dihydroxicinnamic acid 1,2-dioxygenase, found in Rhodococcus jostii (strain RHA1).